The following is a 408-amino-acid chain: Arginine biosynthesis bifunctional protein ArgJ (408 aa).

6 residues coordinate substrate: threonine 156, lysine 182, threonine 193, glutamate 279, asparagine 403, and serine 408. Threonine 193 acts as the Nucleophile in catalysis.

It belongs to the ArgJ family. In terms of assembly, heterotetramer of two alpha and two beta chains.

It localises to the cytoplasm. It catalyses the reaction N(2)-acetyl-L-ornithine + L-glutamate = N-acetyl-L-glutamate + L-ornithine. The enzyme catalyses L-glutamate + acetyl-CoA = N-acetyl-L-glutamate + CoA + H(+). The protein operates within amino-acid biosynthesis; L-arginine biosynthesis; L-ornithine and N-acetyl-L-glutamate from L-glutamate and N(2)-acetyl-L-ornithine (cyclic): step 1/1. Its pathway is amino-acid biosynthesis; L-arginine biosynthesis; N(2)-acetyl-L-ornithine from L-glutamate: step 1/4. Functionally, catalyzes two activities which are involved in the cyclic version of arginine biosynthesis: the synthesis of N-acetylglutamate from glutamate and acetyl-CoA as the acetyl donor, and of ornithine by transacetylation between N(2)-acetylornithine and glutamate. The chain is Arginine biosynthesis bifunctional protein ArgJ from Bordetella pertussis (strain Tohama I / ATCC BAA-589 / NCTC 13251).